The following is a 497-amino-acid chain: uncharacterized protein (497 aa).

The next 11 helical transmembrane spans lie at 91 to 111, 119 to 139, 149 to 169, 179 to 199, 215 to 235, 283 to 303, 319 to 339, 347 to 367, 374 to 394, 406 to 426, and 439 to 459; these read WVGT…STLL, VTSA…LVHS, LLGI…AQWY, AFLV…SYGL, ILFI…FIHI, MYLY…LSNF, LLMN…FGLI, MDIA…IAFA, LAGY…LSCI, FMSA…PQTF, and VSFV…YAVN.

This sequence belongs to the major facilitator superfamily. Allantoate permease family.

The protein resides in the golgi apparatus. The protein localises to the membrane. This is an uncharacterized protein from Schizosaccharomyces pombe (strain 972 / ATCC 24843) (Fission yeast).